Reading from the N-terminus, the 202-residue chain is Snake venom metalloproteinase fibrolase (202 aa).

Positions Arg6–Pro202 constitute a Peptidase M12B domain. Glu9 lines the Ca(2+) pocket. Residue Asn25 is glycosylated (N-linked (GlcNAc...) asparagine). Ca(2+) is bound at residue Asp93. Cystine bridges form between Cys117–Cys197, Cys157–Cys181, and Cys159–Cys164. Residue His142 participates in Zn(2+) binding. Glu143 is an active-site residue. Zn(2+) is bound by residues His146 and His152. The Ca(2+) site is built by Cys197 and Asn200.

Belongs to the venom metalloproteinase (M12B) family. P-I subfamily. Monomer. The cofactor is Zn(2+). Post-translationally, glycosylated. As to expression, expressed by the venom gland.

The protein resides in the secreted. It carries out the reaction Hydrolysis of 14-Ala-|-Leu-15 in insulin B chain and 413-Lys-|-Leu-414 in alpha-chain of fibrinogen.. Activated by calcium and magnesium ions. Inhibited by EDTA, DTT and L-cysteine. Activity is not affected by PMSF or heparin. Functionally, has fibrino(geno)lytic activity on the alpha and beta chains of fibrinogen (FGA and FGB). Inhibits human ADP- and collagen-induced platelet aggregation on platelet-rich plasma but does not affect the thrombin-induced aggregation of rabbit washed platelets. Slightly degrades plasminogen. In Macrovipera lebetinus (Levantine viper), this protein is Snake venom metalloproteinase fibrolase.